Reading from the N-terminus, the 634-residue chain is DNA-directed RNA polymerase subunit gamma (634 aa).

Zn(2+)-binding residues include cysteine 74, cysteine 76, cysteine 89, and cysteine 92. Residues aspartate 471, aspartate 473, and aspartate 475 each coordinate Mg(2+).

Belongs to the RNA polymerase beta' chain family. RpoC1 subfamily. In terms of assembly, in cyanobacteria the RNAP catalytic core is composed of 2 alpha, 1 beta, 1 beta', 1 gamma and 1 omega subunit. When a sigma factor is associated with the core the holoenzyme is formed, which can initiate transcription. Mg(2+) serves as cofactor. Zn(2+) is required as a cofactor.

It catalyses the reaction RNA(n) + a ribonucleoside 5'-triphosphate = RNA(n+1) + diphosphate. Functionally, DNA-dependent RNA polymerase catalyzes the transcription of DNA into RNA using the four ribonucleoside triphosphates as substrates. This chain is DNA-directed RNA polymerase subunit gamma, found in Prochlorococcus marinus (strain AS9601).